The primary structure comprises 222 residues: 2-C-methyl-D-erythritol 4-phosphate cytidylyltransferase (222 aa).

Belongs to the IspD/TarI cytidylyltransferase family. IspD subfamily.

The catalysed reaction is 2-C-methyl-D-erythritol 4-phosphate + CTP + H(+) = 4-CDP-2-C-methyl-D-erythritol + diphosphate. It participates in isoprenoid biosynthesis; isopentenyl diphosphate biosynthesis via DXP pathway; isopentenyl diphosphate from 1-deoxy-D-xylulose 5-phosphate: step 2/6. Functionally, catalyzes the formation of 4-diphosphocytidyl-2-C-methyl-D-erythritol from CTP and 2-C-methyl-D-erythritol 4-phosphate (MEP). The protein is 2-C-methyl-D-erythritol 4-phosphate cytidylyltransferase of Thermotoga maritima (strain ATCC 43589 / DSM 3109 / JCM 10099 / NBRC 100826 / MSB8).